Consider the following 214-residue polypeptide: Ribosomal RNA small subunit methyltransferase G (214 aa).

S-adenosyl-L-methionine contacts are provided by residues Gly-77, Leu-82, 128–129 (VE), and Arg-143.

It belongs to the methyltransferase superfamily. RNA methyltransferase RsmG family.

The protein localises to the cytoplasm. The enzyme catalyses guanosine(527) in 16S rRNA + S-adenosyl-L-methionine = N(7)-methylguanosine(527) in 16S rRNA + S-adenosyl-L-homocysteine. Specifically methylates the N7 position of guanine in position 527 of 16S rRNA. This is Ribosomal RNA small subunit methyltransferase G from Nitrosomonas eutropha (strain DSM 101675 / C91 / Nm57).